We begin with the raw amino-acid sequence, 480 residues long: ATP synthase subunit beta (480 aa).

An ATP-binding site is contributed by 153 to 160 (GGAGVGKT).

This sequence belongs to the ATPase alpha/beta chains family. As to quaternary structure, F-type ATPases have 2 components, CF(1) - the catalytic core - and CF(0) - the membrane proton channel. CF(1) has five subunits: alpha(3), beta(3), gamma(1), delta(1), epsilon(1). CF(0) has three main subunits: a(1), b(2) and c(9-12). The alpha and beta chains form an alternating ring which encloses part of the gamma chain. CF(1) is attached to CF(0) by a central stalk formed by the gamma and epsilon chains, while a peripheral stalk is formed by the delta and b chains.

The protein resides in the cell membrane. The enzyme catalyses ATP + H2O + 4 H(+)(in) = ADP + phosphate + 5 H(+)(out). Its function is as follows. Produces ATP from ADP in the presence of a proton gradient across the membrane. The catalytic sites are hosted primarily by the beta subunits. This chain is ATP synthase subunit beta, found in Lactobacillus johnsonii (strain CNCM I-12250 / La1 / NCC 533).